The sequence spans 955 residues: 2-oxoglutarate dehydrogenase E1 component (955 aa).

The protein belongs to the alpha-ketoglutarate dehydrogenase family. Homodimer. Part of the 2-oxoglutarate dehydrogenase (OGDH) complex composed of E1 (2-oxoglutarate dehydrogenase), E2 (dihydrolipoamide succinyltransferase) and E3 (dihydrolipoamide dehydrogenase); the complex contains multiple copies of the three enzymatic components (E1, E2 and E3). Thiamine diphosphate is required as a cofactor.

It carries out the reaction N(6)-[(R)-lipoyl]-L-lysyl-[protein] + 2-oxoglutarate + H(+) = N(6)-[(R)-S(8)-succinyldihydrolipoyl]-L-lysyl-[protein] + CO2. E1 component of the 2-oxoglutarate dehydrogenase (OGDH) complex which catalyzes the decarboxylation of 2-oxoglutarate, the first step in the conversion of 2-oxoglutarate to succinyl-CoA and CO(2). The protein is 2-oxoglutarate dehydrogenase E1 component of Bacillus mycoides (strain KBAB4) (Bacillus weihenstephanensis).